We begin with the raw amino-acid sequence, 396 residues long: Elongation factor Tu (396 aa).

The tr-type G domain occupies K10–V205. The interval G19–T26 is G1. Residue G19–T26 participates in GTP binding. T26 is a binding site for Mg(2+). Positions G62–N66 are G2. The segment at D83–G86 is G3. GTP-binding positions include D83 to H87 and N138 to D141. The tract at residues N138–D141 is G4. A G5 region spans residues S175–L177.

Belongs to the TRAFAC class translation factor GTPase superfamily. Classic translation factor GTPase family. EF-Tu/EF-1A subfamily. As to quaternary structure, monomer.

It localises to the cytoplasm. It carries out the reaction GTP + H2O = GDP + phosphate + H(+). Its function is as follows. GTP hydrolase that promotes the GTP-dependent binding of aminoacyl-tRNA to the A-site of ribosomes during protein biosynthesis. This Mycolicibacterium vanbaalenii (strain DSM 7251 / JCM 13017 / BCRC 16820 / KCTC 9966 / NRRL B-24157 / PYR-1) (Mycobacterium vanbaalenii) protein is Elongation factor Tu.